The chain runs to 476 residues: Aspartyl/glutamyl-tRNA(Asn/Gln) amidotransferase subunit B (476 aa).

It belongs to the GatB/GatE family. GatB subfamily. As to quaternary structure, heterotrimer of A, B and C subunits.

The catalysed reaction is L-glutamyl-tRNA(Gln) + L-glutamine + ATP + H2O = L-glutaminyl-tRNA(Gln) + L-glutamate + ADP + phosphate + H(+). The enzyme catalyses L-aspartyl-tRNA(Asn) + L-glutamine + ATP + H2O = L-asparaginyl-tRNA(Asn) + L-glutamate + ADP + phosphate + 2 H(+). Its function is as follows. Allows the formation of correctly charged Asn-tRNA(Asn) or Gln-tRNA(Gln) through the transamidation of misacylated Asp-tRNA(Asn) or Glu-tRNA(Gln) in organisms which lack either or both of asparaginyl-tRNA or glutaminyl-tRNA synthetases. The reaction takes place in the presence of glutamine and ATP through an activated phospho-Asp-tRNA(Asn) or phospho-Glu-tRNA(Gln). This Clostridium botulinum (strain Alaska E43 / Type E3) protein is Aspartyl/glutamyl-tRNA(Asn/Gln) amidotransferase subunit B.